Reading from the N-terminus, the 441-residue chain is Amino-acid acetyltransferase (441 aa).

The region spanning 295 to 434 (EQVRRATIND…QALYNYQRRS (140 aa)) is the N-acetyltransferase domain.

Belongs to the acetyltransferase family. ArgA subfamily. In terms of assembly, homohexamer.

The protein localises to the cytoplasm. The catalysed reaction is L-glutamate + acetyl-CoA = N-acetyl-L-glutamate + CoA + H(+). Its pathway is amino-acid biosynthesis; L-arginine biosynthesis; N(2)-acetyl-L-ornithine from L-glutamate: step 1/4. The protein is Amino-acid acetyltransferase of Pectobacterium carotovorum subsp. carotovorum (strain PC1).